We begin with the raw amino-acid sequence, 892 residues long: Protein translocase subunit SecA (892 aa).

Residues Q89, 107 to 111 (GEGKT), and D517 contribute to the ATP site. 4 residues coordinate Zn(2+): C879, C881, C890, and H891.

It belongs to the SecA family. As to quaternary structure, monomer and homodimer. Part of the essential Sec protein translocation apparatus which comprises SecA, SecYEG and auxiliary proteins SecDF-YajC and YidC. Zn(2+) is required as a cofactor.

The protein resides in the cell inner membrane. It is found in the cytoplasm. The enzyme catalyses ATP + H2O + cellular proteinSide 1 = ADP + phosphate + cellular proteinSide 2.. Functionally, part of the Sec protein translocase complex. Interacts with the SecYEG preprotein conducting channel. Has a central role in coupling the hydrolysis of ATP to the transfer of proteins into and across the cell membrane, serving as an ATP-driven molecular motor driving the stepwise translocation of polypeptide chains across the membrane. This Ruthia magnifica subsp. Calyptogena magnifica protein is Protein translocase subunit SecA.